A 183-amino-acid polypeptide reads, in one-letter code: Acireductone dioxygenase (183 aa).

Fe(2+)-binding residues include His99, His101, Glu105, and His144. His99, His101, Glu105, and His144 together coordinate Ni(2+).

It belongs to the acireductone dioxygenase (ARD) family. As to quaternary structure, monomer. The cofactor is Fe(2+). Requires Ni(2+) as cofactor.

The catalysed reaction is 1,2-dihydroxy-5-(methylsulfanyl)pent-1-en-3-one + O2 = 3-(methylsulfanyl)propanoate + CO + formate + 2 H(+). It carries out the reaction 1,2-dihydroxy-5-(methylsulfanyl)pent-1-en-3-one + O2 = 4-methylsulfanyl-2-oxobutanoate + formate + 2 H(+). It participates in amino-acid biosynthesis; L-methionine biosynthesis via salvage pathway; L-methionine from S-methyl-5-thio-alpha-D-ribose 1-phosphate: step 5/6. Catalyzes 2 different reactions between oxygen and the acireductone 1,2-dihydroxy-3-keto-5-methylthiopentene (DHK-MTPene) depending upon the metal bound in the active site. Fe-containing acireductone dioxygenase (Fe-ARD) produces formate and 2-keto-4-methylthiobutyrate (KMTB), the alpha-ketoacid precursor of methionine in the methionine recycle pathway. Ni-containing acireductone dioxygenase (Ni-ARD) produces methylthiopropionate, carbon monoxide and formate, and does not lie on the methionine recycle pathway. The protein is Acireductone dioxygenase of Microcystis aeruginosa (strain NIES-843 / IAM M-2473).